Reading from the N-terminus, the 491-residue chain is Ketol-acid reductoisomerase (NADP(+)) (491 aa).

Positions 15-208 constitute a KARI N-terminal Rossmann domain; sequence AQLGKCRFMG…GGHRAGVLES (194 aa). Residues 45 to 48, arginine 68, arginine 76, serine 78, and 108 to 110 each bind NADP(+); these read CGAQ and DKQ. Histidine 132 is an active-site residue. Residue glycine 158 participates in NADP(+) binding. KARI C-terminal knotted domains are found at residues 209-344 and 345-484; these read SFVA…TAPQ and FEGK…MTDM. Aspartate 217, glutamate 221, glutamate 389, and glutamate 393 together coordinate Mg(2+). Serine 414 lines the substrate pocket.

This sequence belongs to the ketol-acid reductoisomerase family. Requires Mg(2+) as cofactor.

The catalysed reaction is (2R)-2,3-dihydroxy-3-methylbutanoate + NADP(+) = (2S)-2-acetolactate + NADPH + H(+). The enzyme catalyses (2R,3R)-2,3-dihydroxy-3-methylpentanoate + NADP(+) = (S)-2-ethyl-2-hydroxy-3-oxobutanoate + NADPH + H(+). It participates in amino-acid biosynthesis; L-isoleucine biosynthesis; L-isoleucine from 2-oxobutanoate: step 2/4. Its pathway is amino-acid biosynthesis; L-valine biosynthesis; L-valine from pyruvate: step 2/4. Involved in the biosynthesis of branched-chain amino acids (BCAA). Catalyzes an alkyl-migration followed by a ketol-acid reduction of (S)-2-acetolactate (S2AL) to yield (R)-2,3-dihydroxy-isovalerate. In the isomerase reaction, S2AL is rearranged via a Mg-dependent methyl migration to produce 3-hydroxy-3-methyl-2-ketobutyrate (HMKB). In the reductase reaction, this 2-ketoacid undergoes a metal-dependent reduction by NADPH to yield (R)-2,3-dihydroxy-isovalerate. The polypeptide is Ketol-acid reductoisomerase (NADP(+)) (Salmonella dublin (strain CT_02021853)).